The following is a 552-amino-acid chain: Lysine--tRNA ligase (552 aa).

Positions 71 to 79 (PSGLPHLGT) match the 'HIGH' region motif. A 'KMSKS' region motif is present at residues 319-323 (KISKS). Residue Lys-322 coordinates ATP.

It belongs to the class-I aminoacyl-tRNA synthetase family.

It is found in the cytoplasm. It carries out the reaction tRNA(Lys) + L-lysine + ATP = L-lysyl-tRNA(Lys) + AMP + diphosphate. This Caulobacter sp. (strain K31) protein is Lysine--tRNA ligase.